The sequence spans 447 residues: GTPase Der (447 aa).

EngA-type G domains follow at residues 4-165 and 180-357; these read QIIT…PEEE and LQIV…KIWN. Residues 10–17, 57–61, 119–122, 186–193, 233–237, and 298–301 contribute to the GTP site; these read GRPNVGKS, DTPGL, NKCE, GRPNAGKS, DTAGL, and NKWD. Residues 358-443 enclose the KH-like domain; it reads KKITTSKLNE…PIRFIYVKTK (86 aa).

This sequence belongs to the TRAFAC class TrmE-Era-EngA-EngB-Septin-like GTPase superfamily. EngA (Der) GTPase family. Associates with the 50S ribosomal subunit.

Its function is as follows. GTPase that plays an essential role in the late steps of ribosome biogenesis. This is GTPase Der from Rickettsia africae (strain ESF-5).